Here is a 432-residue protein sequence, read N- to C-terminus: Patatin-like phospholipase domain-containing protein 5 (432 aa).

The PNPLA domain occupies 12–181 (LSFSGSGYMG…SNNLPFSDCP (170 aa)). Residues 16-21 (GSGYMG) carry the GXGXXG motif. The GXSXG signature appears at 47-51 (GSSSG). The Nucleophile role is filled by Ser-49. Asp-168 functions as the Proton acceptor in the catalytic mechanism. A DGA/G motif is present at residues 168–170 (DGA). Residues 404–423 (ADSGLLRQQRGTAPSGNRPL) are disordered.

The enzyme catalyses a triacylglycerol + H2O = a diacylglycerol + a fatty acid + H(+). Its function is as follows. Has abundant triacylglycerol lipase activity. The chain is Patatin-like phospholipase domain-containing protein 5 from Mus musculus (Mouse).